A 553-amino-acid polypeptide reads, in one-letter code: CTP synthase (553 aa).

The amidoligase domain stretch occupies residues M1–I277. A CTP-binding site is contributed by S26. S26 contributes to the UTP binding site. Residues G27–I32 and D84 contribute to the ATP site. Mg(2+) is bound by residues D84 and E152. Residues D159–E161, K198–Q203, and K234 contribute to the CTP site. UTP-binding positions include K198–Q203 and K234. A Glutamine amidotransferase type-1 domain is found at L307–H544. G364 is a binding site for L-glutamine. The Nucleophile; for glutamine hydrolysis role is filled by C391. Residues L392–Q395, E415, and R472 each bind L-glutamine. Active-site residues include H517 and E519.

It belongs to the CTP synthase family. In terms of assembly, homotetramer.

It carries out the reaction UTP + L-glutamine + ATP + H2O = CTP + L-glutamate + ADP + phosphate + 2 H(+). The catalysed reaction is L-glutamine + H2O = L-glutamate + NH4(+). It catalyses the reaction UTP + NH4(+) + ATP = CTP + ADP + phosphate + 2 H(+). It functions in the pathway pyrimidine metabolism; CTP biosynthesis via de novo pathway; CTP from UDP: step 2/2. With respect to regulation, allosterically activated by GTP, when glutamine is the substrate; GTP has no effect on the reaction when ammonia is the substrate. The allosteric effector GTP functions by stabilizing the protein conformation that binds the tetrahedral intermediate(s) formed during glutamine hydrolysis. Inhibited by the product CTP, via allosteric rather than competitive inhibition. Its function is as follows. Catalyzes the ATP-dependent amination of UTP to CTP with either L-glutamine or ammonia as the source of nitrogen. Regulates intracellular CTP levels through interactions with the four ribonucleotide triphosphates. The protein is CTP synthase of Haloarcula marismortui (strain ATCC 43049 / DSM 3752 / JCM 8966 / VKM B-1809) (Halobacterium marismortui).